A 197-amino-acid chain; its full sequence is Interleukin-17C (197 aa).

An N-terminal signal peptide occupies residues 1–18 (MTLLPGLLFLTWLHTCLA). 2 disulfides stabilise this stretch: Cys-129/Cys-189 and Cys-134/Cys-191.

It belongs to the IL-17 family. Binds to a heterodimer formed by IL17RA and IL17RE.

Its subcellular location is the secreted. In terms of biological role, cytokine that plays a crucial role in innate immunity of the epithelium, including to intestinal bacterial pathogens, in an autocrine manner. Stimulates the production of antibacterial peptides and pro-inflammatory molecules for host defense by signaling through the NF-kappa-B and MAPK pathways. Acts synergically with IL22 in inducing the expression of antibacterial peptides, including S100A8, S100A9, REG3A and REG3G. Synergy is also observed with TNF and IL1B in inducing DEFB2 from keratinocytes. Depending on the type of insult, may have both protective and pathogenic properties, either by maintaining epithelial homeostasis after an inflammatory challenge or by promoting inflammatory phenotype. Enhanced IL17C/IL17RE signaling may also lead to greater susceptibility to autoimmune diseases. In Homo sapiens (Human), this protein is Interleukin-17C (IL17C).